A 912-amino-acid polypeptide reads, in one-letter code: Cadherin-2 (912 aa).

Residues 1-28 (MCRIAGTPPRILPPLALMLLAALQQAPI) form the signal peptide. A propeptide spanning residues 29 to 164 (KATCEDMLCK…DSSHLKRQKR (136 aa)) is cleaved from the precursor. 5 consecutive Cadherin domains span residues 165-272 (DWVI…RPEF), 273-387 (LHQV…PPEF), 388-502 (TAMT…SPYF), 503-609 (VPNP…DNAP), and 610-720 (QVNP…DVDR). The Extracellular portion of the chain corresponds to 165–729 (DWVIPPINLP…RIVGAGLGTG (565 aa)). Ca(2+) is bound by residues Glu175, Asp231, Glu233, Asp264, Met265, Asn266, Asp267, and Asn268. N-linked (GlcNAc...) asparagine glycosylation occurs at Asn278. Positions 298, 300, and 306 each coordinate Ca(2+). A glycan (N-linked (GlcNAc...) asparagine) is linked at Asn330. Asp358 contacts Ca(2+). N-linked (GlcNAc...) asparagine glycosylation is found at Asn407, Asn578, Asn628, and Asn657. The chain crosses the membrane as a helical span at residues 730–752 (AIIAILLCIIILLILVLMFVVWM). Residues 753–912 (KRRDKERQAK…LADMYGGGDD (160 aa)) are Cytoplasmic-facing. The segment covering 869-886 (SGSTAGSLSSLNSSSSGG) has biased composition (low complexity). The tract at residues 869–890 (SGSTAGSLSSLNSSSSGGEQDY) is disordered.

As to quaternary structure, homodimer (via extracellular region). Can also form heterodimers with other cadherins (via extracellular region). Dimerization occurs in trans, i.e. with a cadherin chain from another cell. Interacts with CTNNA2. In terms of tissue distribution, expressed at intercalated disks in the heart (at protein level).

The protein localises to the cell membrane. It localises to the sarcolemma. It is found in the cell junction. The protein resides in the cell surface. Its subcellular location is the desmosome. The protein localises to the adherens junction. In terms of biological role, calcium-dependent cell adhesion protein; preferentially mediates homotypic cell-cell adhesion. Cadherins may thus contribute to the sorting of heterogeneous cell types, and thereby play an important role during embryonic development. Required for proper neurite branching, and pre- and postsynaptic organization. The chain is Cadherin-2 (CDH2) from Gallus gallus (Chicken).